Here is a 338-residue protein sequence, read N- to C-terminus: D-erythrose-4-phosphate dehydrogenase (338 aa).

NAD(+) is bound at residue 12 to 13 (RI). Substrate is bound by residues 154 to 156 (SCT), arginine 200, 213 to 214 (TK), and arginine 236. Catalysis depends on cysteine 155, which acts as the Nucleophile. Asparagine 318 provides a ligand contact to NAD(+).

This sequence belongs to the glyceraldehyde-3-phosphate dehydrogenase family. Epd subfamily. Homotetramer.

It is found in the cytoplasm. The catalysed reaction is D-erythrose 4-phosphate + NAD(+) + H2O = 4-phospho-D-erythronate + NADH + 2 H(+). The protein operates within cofactor biosynthesis; pyridoxine 5'-phosphate biosynthesis; pyridoxine 5'-phosphate from D-erythrose 4-phosphate: step 1/5. Catalyzes the NAD-dependent conversion of D-erythrose 4-phosphate to 4-phosphoerythronate. This Pectobacterium carotovorum subsp. carotovorum (strain PC1) protein is D-erythrose-4-phosphate dehydrogenase.